Consider the following 692-residue polypeptide: Ribonuclease R (692 aa).

Positions 204-525 constitute an RNB domain; sequence RKDLRDLLCF…IVHRLLFHPL (322 aa). Positions 563–648 constitute an S1 motif domain; that stretch reads KKFLDEQPAT…LTQAIEWTLI (86 aa). Positions 651–692 are disordered; sequence KERSSSKKKKAKAKSNATQVKKKSSSKKKKAVSKAKKNRGGK. The span at 670–692 shows a compositional bias: basic residues; that stretch reads VKKKSSSKKKKAVSKAKKNRGGK.

Belongs to the RNR ribonuclease family. RNase R subfamily.

Its subcellular location is the cytoplasm. The catalysed reaction is Exonucleolytic cleavage in the 3'- to 5'-direction to yield nucleoside 5'-phosphates.. 3'-5' exoribonuclease that releases 5'-nucleoside monophosphates and is involved in maturation of structured RNAs. This is Ribonuclease R from Chlamydia muridarum (strain MoPn / Nigg).